The chain runs to 427 residues: Serine hydroxymethyltransferase (427 aa).

120–122 (GHI) lines the (6S)-5,6,7,8-tetrahydrofolate pocket. K226 bears the N6-(pyridoxal phosphate)lysine mark. E243 lines the (6S)-5,6,7,8-tetrahydrofolate pocket.

It belongs to the SHMT family. Homodimer. The cofactor is pyridoxal 5'-phosphate.

Its subcellular location is the cytoplasm. Its pathway is amino-acid biosynthesis; glycine biosynthesis; glycine from L-serine: step 1/1. Catalyzes the reversible interconversion of serine and glycine with a modified folate serving as the one-carbon carrier. Also exhibits a pteridine-independent aldolase activity toward beta-hydroxyamino acids, producing glycine and aldehydes, via a retro-aldol mechanism. This is Serine hydroxymethyltransferase from Thermococcus gammatolerans (strain DSM 15229 / JCM 11827 / EJ3).